A 434-amino-acid chain; its full sequence is MIVRRALALAALALAASPALAAPERPTIVVGSPDFRPLPIAVAAFQGEGDAGAAATQTAEVVRADLVLSGLFDVLDPRGFLADPAEGFAAPSIRFARWADVGADGLAKARVRRGPGGLEGELHLYEVRAGREVLVKLLRVDGADARSLAHRMADEIVRYYTREPGIFATRIAAIRRGRGTWELVTQDMDGGNQQVLLSERSILMSPAWRPDGREILVTSYRSGRPELWAYRFSDRAFRPLGRQRNAFGGVYSPDGSRIAFTVSEGNVTDLWVMSADGSGARKLTSDPAIDVSPTWSPDGRRIAFVSDRSGTPQIYVMGADGSGARRLTFQGNYNQTPQWSPRGDLIAFTARDERKVFDVFVVAPDSGAISRITQDQGRTNEEPSWAPNGRLMIFRTDRNGGIQLVVSDARGDRQTPVTSGKTDLAAPAWGPLAP.

Positions Met1 to Ala21 are cleaved as a signal peptide. Residues Gly411–Pro434 are disordered.

Belongs to the TolB family. As to quaternary structure, the Tol-Pal system is composed of five core proteins: the inner membrane proteins TolA, TolQ and TolR, the periplasmic protein TolB and the outer membrane protein Pal. They form a network linking the inner and outer membranes and the peptidoglycan layer.

It localises to the periplasm. In terms of biological role, part of the Tol-Pal system, which plays a role in outer membrane invagination during cell division and is important for maintaining outer membrane integrity. In Anaeromyxobacter dehalogenans (strain 2CP-C), this protein is Tol-Pal system protein TolB.